Consider the following 172-residue polypeptide: Small ribosomal subunit protein bS16 (172 aa).

The disordered stretch occupies residues 125 to 172 (KKRKAKEEAEAKAAAEKAAEEAAAAEAAKAEEEAAKAEEADSAEESAE). Composition is skewed to basic and acidic residues over residues 129 to 144 (AKEE…KAAE) and 152 to 163 (AKAEEEAAKAEE).

This sequence belongs to the bacterial ribosomal protein bS16 family.

The polypeptide is Small ribosomal subunit protein bS16 (Corynebacterium aurimucosum (strain ATCC 700975 / DSM 44827 / CIP 107346 / CN-1) (Corynebacterium nigricans)).